The primary structure comprises 295 residues: Pyridoxal 5'-phosphate synthase subunit PdxS (295 aa).

D25 provides a ligand contact to D-ribose 5-phosphate. Residue K82 is the Schiff-base intermediate with D-ribose 5-phosphate of the active site. A D-ribose 5-phosphate-binding site is contributed by G154. D-glyceraldehyde 3-phosphate is bound at residue R166. Residues G215 and G236 to S237 each bind D-ribose 5-phosphate.

This sequence belongs to the PdxS/SNZ family. In terms of assembly, in the presence of PdxT, forms a dodecamer of heterodimers.

The catalysed reaction is aldehydo-D-ribose 5-phosphate + D-glyceraldehyde 3-phosphate + L-glutamine = pyridoxal 5'-phosphate + L-glutamate + phosphate + 3 H2O + H(+). The protein operates within cofactor biosynthesis; pyridoxal 5'-phosphate biosynthesis. Functionally, catalyzes the formation of pyridoxal 5'-phosphate from ribose 5-phosphate (RBP), glyceraldehyde 3-phosphate (G3P) and ammonia. The ammonia is provided by the PdxT subunit. Can also use ribulose 5-phosphate and dihydroxyacetone phosphate as substrates, resulting from enzyme-catalyzed isomerization of RBP and G3P, respectively. In Staphylococcus carnosus (strain TM300), this protein is Pyridoxal 5'-phosphate synthase subunit PdxS.